A 549-amino-acid polypeptide reads, in one-letter code: Cytoplasmic trehalase (549 aa).

Substrate contacts are provided by residues Arg-168, 175–176 (WD), Asn-212, 221–223 (RSQ), 292–294 (RDE), and Gly-324. Active-site proton donor/acceptor residues include Asp-326 and Glu-509. Residue Glu-525 coordinates substrate.

It belongs to the glycosyl hydrolase 37 family. Monomer.

Its subcellular location is the cytoplasm. It carries out the reaction alpha,alpha-trehalose + H2O = alpha-D-glucose + beta-D-glucose. It functions in the pathway glycan degradation; trehalose degradation; D-glucose from alpha,alpha-trehalose: step 1/1. In terms of biological role, hydrolyzes trehalose to glucose. Could be involved, in cells returning to low osmolarity conditions, in the utilization of the accumulated cytoplasmic trehalose, which was synthesized in response to high osmolarity. The sequence is that of Cytoplasmic trehalase from Escherichia coli O157:H7.